Consider the following 76-residue polypeptide: Esculentin-2MT2 (76 aa).

A signal peptide spans 1–22 (MFTLKKSMLLLFFLGTISLSLC). The propeptide at 23–37 (EEERSADEDDGEKEV) is removed in mature form. The cysteines at positions 70 and 76 are disulfide-linked.

Belongs to the frog skin active peptide (FSAP) family. Esculentin subfamily. Expressed by the skin glands.

It is found in the secreted. Functionally, antimicrobial peptide. Active against a variety of Gram-negative and Gram-positive bacterial strains. Active against fungi. Shows strong hemolytic activity against human erythrocytes. The polypeptide is Esculentin-2MT2 (Amolops mantzorum (Sichuan torrent frog)).